Here is a 473-residue protein sequence, read N- to C-terminus: H(+)/Cl(-) exchange transporter ClcA (473 aa).

The Cytoplasmic portion of the chain corresponds to 1-32 (MKTDTPSLETPQAARLRRRQLIRQLLERDKTP). Residues 33-69 (LAILFMAAVVGTLVGLAAVAFDKGVAWLQNQRMGALV) traverse the membrane as a helical segment. Topologically, residues 70 to 76 (HTADNYP) are periplasmic. Residues 77 to 100 (LLLTVAFLCSAVLAMFGYFLVRKY) traverse the membrane as a helical segment. The Selectivity filter part_1 motif lies at 106-110 (GSGIP). Position 107 (Ser-107) interacts with chloride. The segment at residues 109 to 116 (IPEIEGAL) is an intramembrane region (helical). The Cytoplasmic portion of the chain corresponds to 117–123 (EDQRPVR). Helical transmembrane passes span 124-141 (WWRVLPVKFFGGLGTLGG) and 148-166 (EGPTVQIGGNIGRMVLDIF). Positions 146 to 150 (GREGP) match the Selectivity filter part_2 motif. The Cytoplasmic portion of the chain corresponds to 167–176 (RLKGDEARHT). 2 intramembrane regions (helical) span residues 177 to 189 (LLATGAAAGLAAA) and 193 to 201 (PLAGILFII). Residues 202-214 (EEMRPQFRYTLIS) are Cytoplasmic-facing. The helical transmembrane segment at 215-232 (IKAVFIGVIMSTIMYRIF) threads the bilayer. Over 233 to 252 (NHEVALIDVGKLSDAPLNTL) the chain is Periplasmic. Residues 253-281 (WLYLILGIIFGIFGPIFNKWVLGMQDLLH) traverse the membrane as a helical segment. The Cytoplasmic portion of the chain corresponds to 282–287 (RVHGGN). A helical membrane pass occupies residues 288–309 (ITKWILMGGAIGGLCGLLGFVA). The Periplasmic segment spans residues 310 to 329 (PATSGGGFNLIPIATAGNFS). 2 helical membrane-spanning segments follow: residues 330–349 (MGMLVFIFVARVITTLLCFS) and 355–376 (GIFAPMLALGTVLGTAFGMVAV). Positions 355–359 (GIFAP) match the Selectivity filter part_3 motif. Residues Ile-356 and Phe-357 each coordinate chloride. Over 377 to 386 (ELFPQYHLEA) the chain is Periplasmic. Positions 387–401 (GTFAIAGMGALLAAS) form an intramembrane region, helical. An intramembrane region (note=Loop between two helices) is located at residues 402–404 (IRA). The segment at residues 405–416 (PLTGIILVLEMT) is an intramembrane region (helical). An intramembrane region (note=Loop between two helices) is located at residues 417-421 (DNYQL). A helical transmembrane segment spans residues 422-438 (ILPMIITGLGATLLAQF). The Cytoplasmic portion of the chain corresponds to 439-473 (TGGKPLYSAILARTLAKQEAEQLARSKAASASENT). Chloride is bound at residue Tyr-445.

This sequence belongs to the chloride channel (TC 2.A.49) family. ClcA subfamily. As to quaternary structure, homodimer.

It is found in the cell inner membrane. The catalysed reaction is 2 chloride(in) + H(+)(out) = 2 chloride(out) + H(+)(in). In terms of biological role, proton-coupled chloride transporter. Functions as antiport system and exchanges two chloride ions for 1 proton. Probably acts as an electrical shunt for an outwardly-directed proton pump that is linked to amino acid decarboxylation, as part of the extreme acid resistance (XAR) response. The sequence is that of H(+)/Cl(-) exchange transporter ClcA from Escherichia coli O9:H4 (strain HS).